The following is a 59-amino-acid chain: Large ribosomal subunit protein uL30 (59 aa).

Belongs to the universal ribosomal protein uL30 family. Part of the 50S ribosomal subunit.

The polypeptide is Large ribosomal subunit protein uL30 (Rhodococcus jostii (strain RHA1)).